Here is a 346-residue protein sequence, read N- to C-terminus: Probable electron transfer flavoprotein subunit alpha, mitochondrial (346 aa).

285–313 (LYVAVGISGAIQHLAGMKESKMIVAINKD) provides a ligand contact to FAD.

It belongs to the ETF alpha-subunit/FixB family. In terms of assembly, heterodimer of an alpha and a beta subunit. The cofactor is FAD.

The protein localises to the mitochondrion matrix. Its function is as follows. The electron transfer flavoprotein serves as a specific electron acceptor for several dehydrogenases, including five acyl-CoA dehydrogenases, glutaryl-CoA and sarcosine dehydrogenase. It transfers the electrons to the main mitochondrial respiratory chain via ETF-ubiquinone oxidoreductase (ETF dehydrogenase). In Cryptococcus neoformans var. grubii (Filobasidiella neoformans var. grubii), this protein is Probable electron transfer flavoprotein subunit alpha, mitochondrial (ETF1).